The chain runs to 758 residues: Aspartyl/asparaginyl beta-hydroxylase (758 aa).

The tract at residues 1–46 is disordered; sequence MAQRKNAKSSGNSSSSGSGSGSTSAGSSSPGARRETKHGGHKNGRK. Topologically, residues 1 to 53 are cytoplasmic; the sequence is MAQRKNAKSSGNSSSSGSGSGSTSAGSSSPGARRETKHGGHKNGRKGGLSGTS. A compositionally biased stretch (low complexity) spans 9–31; it reads SSGNSSSSGSGSGSTSAGSSSPG. Residue S14 is modified to Phosphoserine. Residues 54 to 74 form a helical; Signal-anchor for type II membrane protein membrane-spanning segment; it reads FFTWFMVIALLGVWTSVAVVW. L64 carries an N-linked (GlcNAc...) asparagine glycan. Residues 75-758 lie on the Lumenal side of the membrane; sequence FDLVDYEEVL…PQQRRSLPAI (684 aa). The Ca(2+) site is built by D91, D93, D95, D97, and D102. Disordered regions lie at residues 111-140 and 304-324; these read ERSTSEPAVPPEEAEPHTEPEEQVPVEAEP and EEQQEVPPETNRKTDDPEQKA. A compositionally biased stretch (basic and acidic residues) spans 313–324; the sequence is TNRKTDDPEQKA. The stretch at 341-374 is one TPR 1 repeat; that stretch reads IKAELDAAEKLRKRGKIEEAVNAFKELVRKYPQS. N452 is a glycosylation site (N-linked (GlcNAc...) asparagine). TPR repeat units follow at residues 454–487, 489–521, and 525–557; these read TSLKNDLGVGYLLIGDNDNAKKVYEEVLSVTPND, FAKVHYGFILKAQNKIAESIPYLKEGIESGDPG, and GRFYFHLGDAMQRVGNKEAYKWYELGHKRGHFA. W625 serves as a coordination point for 2-oxoglutarate. C641 and C648 are joined by a disulfide. Position 668 (S668) interacts with 2-oxoglutarate. H679 is a Fe cation binding site. Position 688-690 (688-690) interacts with 2-oxoglutarate; that stretch reads RMH. A glycan (N-linked (GlcNAc...) asparagine) is linked at N706. H725 provides a ligand contact to Fe cation. R735 lines the 2-oxoglutarate pocket.

It belongs to the aspartyl/asparaginyl beta-hydroxylase family. Monomer. Isoform 8 interacts with ORAI1 and STIM1. Isoform 4 interacts with CASQ2. Fe cation is required as a cofactor. Isoform 1 is detected in all tissues tested. Isoform 8 is mainly expressed in pancreas, heart, brain, kidney and liver. Isoform 8 is expressed in kidney (at protein level).

It is found in the endoplasmic reticulum membrane. The protein localises to the sarcoplasmic reticulum membrane. The enzyme catalyses L-aspartyl-[protein] + 2-oxoglutarate + O2 = 3-hydroxy-L-aspartyl-[protein] + succinate + CO2. Functionally, specifically hydroxylates an Asp or Asn residue in certain epidermal growth factor-like (EGF) domains of a number of proteins. Membrane-bound Ca(2+)-sensing protein, which is a structural component of the ER-plasma membrane junctions. Isoform 8 regulates the activity of Ca(+2) released-activated Ca(+2) (CRAC) channels in T-cells. This Homo sapiens (Human) protein is Aspartyl/asparaginyl beta-hydroxylase (ASPH).